A 258-amino-acid chain; its full sequence is Venom plasminogen activator TSV-PA (258 aa).

An N-terminal signal peptide occupies residues 1–18; sequence MELIRVLANLLILQLSYA. The propeptide occupies 19 to 24; it reads QKSSEL. The region spanning 25–249 is the Peptidase S1 domain; that stretch reads VFGGDECNIN…YLDWIKSIIA (225 aa). 6 cysteine pairs are disulfide-bonded: Cys-31–Cys-163, Cys-50–Cys-66, Cys-98–Cys-256, Cys-142–Cys-210, Cys-174–Cys-189, and Cys-200–Cys-225. Residues His-65 and Asp-110 each act as charge relay system in the active site. Asn-185 carries an N-linked (GlcNAc...) asparagine glycan. Ser-204 acts as the Charge relay system in catalysis.

It belongs to the peptidase S1 family. Snake venom subfamily. Monomer. As to expression, expressed by the venom gland.

Its subcellular location is the secreted. Snake venom serine protease that activates plasminogen. This chain is Venom plasminogen activator TSV-PA, found in Trimeresurus stejnegeri (Chinese green tree viper).